The primary structure comprises 424 residues: Tyrosine--tRNA ligase (424 aa).

Tyrosine 37 contributes to the L-tyrosine binding site. Residues 42 to 51 carry the 'HIGH' region motif; that stretch reads PTADSLHLGH. Lysine 144 carries the post-translational modification N6-acetyllysine. Positions 175 and 179 each coordinate L-tyrosine. Positions 235–239 match the 'KMSKS' region motif; sequence KFGKT. Position 238 (lysine 238) interacts with ATP. Residues 357–414 enclose the S4 RNA-binding domain; the sequence is ADLMQALVDSELQPSRGQARKTIASNAITINGEKQSDPEYFFKEEDRLFGRFTLLRRG.

This sequence belongs to the class-I aminoacyl-tRNA synthetase family. TyrS type 1 subfamily. Homodimer.

Its subcellular location is the cytoplasm. It carries out the reaction tRNA(Tyr) + L-tyrosine + ATP = L-tyrosyl-tRNA(Tyr) + AMP + diphosphate + H(+). Catalyzes the attachment of tyrosine to tRNA(Tyr) in a two-step reaction: tyrosine is first activated by ATP to form Tyr-AMP and then transferred to the acceptor end of tRNA(Tyr). In Escherichia coli O127:H6 (strain E2348/69 / EPEC), this protein is Tyrosine--tRNA ligase.